The following is a 241-amino-acid chain: 2-heptyl-1-hydroxyquinolin-4(1H)-one methyltransferase (241 aa).

It belongs to the methyltransferase superfamily. As to quaternary structure, monomer.

The protein localises to the cytoplasm. It catalyses the reaction 2-heptyl-1-hydroxy-4(1H)-quinolinone + S-adenosyl-L-methionine = 2-heptyl-1-methoxy-4(1H)-quinolinone + S-adenosyl-L-homocysteine + H(+). Functionally, involved in cellular response to chemical stress and may contribute to resistance toward antimicrobial natural compounds as well as drugs. Catalyzes the methylation and detoxification of the P.aeruginosa toxin 2-heptyl-1-hydroxy-4(1H)-quinolinone (HQNO) to 2-heptyl-1-methoxy-4(1H)-quinolinone (HMOQ). The protein is 2-heptyl-1-hydroxyquinolin-4(1H)-one methyltransferase of Mycobacterium bovis (strain BCG / Pasteur 1173P2).